Consider the following 182-residue polypeptide: MTKQKEKRGRRWPWFVAVCVVATLRLFVFSNYVVEGKSMMPTLESGNLLIVNKLSYDIGPIRRFDIIVFHANKKEDYVKRVIGLPGDRIAYKNDILYVNGKKVDEPYLRPYKQKLLDGRLTGDFTLEEVTGKTRVPPGCIFVLGDNRLSSWDSRHFGFVKINQIVGKVDFRYWPFKQFAFQF.

Over 1–13 (MTKQKEKRGRRWP) the chain is Cytoplasmic. Residues 14–30 (WFVAVCVVATLRLFVFS) traverse the membrane as a helical segment. The Extracellular portion of the chain corresponds to 31-182 (NYVVEGKSMM…WPFKQFAFQF (152 aa)). Catalysis depends on residues S38 and K79.

The protein belongs to the peptidase S26 family.

The protein resides in the cell membrane. The catalysed reaction is Cleavage of hydrophobic, N-terminal signal or leader sequences from secreted and periplasmic proteins.. This chain is Signal peptidase I (lepB), found in Bacillus caldolyticus.